The chain runs to 227 residues: Cytochrome c oxidase subunit 2 (227 aa).

The Mitochondrial intermembrane portion of the chain corresponds to 1-14 (MAYPFQLGLQDATS). A helical transmembrane segment spans residues 15–45 (PIMEELLHFHDHTLMIVFLISSLVLYIISLM). Residues 46–59 (LTTKLTHTSTMDAQ) lie on the Mitochondrial matrix side of the membrane. Residues 60 to 87 (EVETVWTILPAIILISIALPSLRILYMM) form a helical membrane-spanning segment. Residues 88-227 (DEINNPSLTV…YFEAWSTLMM (140 aa)) are Mitochondrial intermembrane-facing. The Cu cation site is built by H161, C196, E198, C200, H204, and M207. E198 is a Mg(2+) binding site. The residue at position 218 (Y218) is a Phosphotyrosine.

Belongs to the cytochrome c oxidase subunit 2 family. In terms of assembly, component of the cytochrome c oxidase (complex IV, CIV), a multisubunit enzyme composed of 14 subunits. The complex is composed of a catalytic core of 3 subunits MT-CO1, MT-CO2 and MT-CO3, encoded in the mitochondrial DNA, and 11 supernumerary subunits COX4I, COX5A, COX5B, COX6A, COX6B, COX6C, COX7A, COX7B, COX7C, COX8 and NDUFA4, which are encoded in the nuclear genome. The complex exists as a monomer or a dimer and forms supercomplexes (SCs) in the inner mitochondrial membrane with NADH-ubiquinone oxidoreductase (complex I, CI) and ubiquinol-cytochrome c oxidoreductase (cytochrome b-c1 complex, complex III, CIII), resulting in different assemblies (supercomplex SCI(1)III(2)IV(1) and megacomplex MCI(2)III(2)IV(2)). Found in a complex with TMEM177, COA6, COX18, COX20, SCO1 and SCO2. Interacts with TMEM177 in a COX20-dependent manner. Interacts with COX20. Interacts with COX16. Cu cation is required as a cofactor.

It is found in the mitochondrion inner membrane. The enzyme catalyses 4 Fe(II)-[cytochrome c] + O2 + 8 H(+)(in) = 4 Fe(III)-[cytochrome c] + 2 H2O + 4 H(+)(out). Its function is as follows. Component of the cytochrome c oxidase, the last enzyme in the mitochondrial electron transport chain which drives oxidative phosphorylation. The respiratory chain contains 3 multisubunit complexes succinate dehydrogenase (complex II, CII), ubiquinol-cytochrome c oxidoreductase (cytochrome b-c1 complex, complex III, CIII) and cytochrome c oxidase (complex IV, CIV), that cooperate to transfer electrons derived from NADH and succinate to molecular oxygen, creating an electrochemical gradient over the inner membrane that drives transmembrane transport and the ATP synthase. Cytochrome c oxidase is the component of the respiratory chain that catalyzes the reduction of oxygen to water. Electrons originating from reduced cytochrome c in the intermembrane space (IMS) are transferred via the dinuclear copper A center (CU(A)) of subunit 2 and heme A of subunit 1 to the active site in subunit 1, a binuclear center (BNC) formed by heme A3 and copper B (CU(B)). The BNC reduces molecular oxygen to 2 water molecules using 4 electrons from cytochrome c in the IMS and 4 protons from the mitochondrial matrix. This Lycaon pictus (African wild dog) protein is Cytochrome c oxidase subunit 2 (MT-CO2).